Reading from the N-terminus, the 95-residue chain is Aspartyl/glutamyl-tRNA(Asn/Gln) amidotransferase subunit C (95 aa).

Belongs to the GatC family. Heterotrimer of A, B and C subunits.

It catalyses the reaction L-glutamyl-tRNA(Gln) + L-glutamine + ATP + H2O = L-glutaminyl-tRNA(Gln) + L-glutamate + ADP + phosphate + H(+). It carries out the reaction L-aspartyl-tRNA(Asn) + L-glutamine + ATP + H2O = L-asparaginyl-tRNA(Asn) + L-glutamate + ADP + phosphate + 2 H(+). Its function is as follows. Allows the formation of correctly charged Asn-tRNA(Asn) or Gln-tRNA(Gln) through the transamidation of misacylated Asp-tRNA(Asn) or Glu-tRNA(Gln) in organisms which lack either or both of asparaginyl-tRNA or glutaminyl-tRNA synthetases. The reaction takes place in the presence of glutamine and ATP through an activated phospho-Asp-tRNA(Asn) or phospho-Glu-tRNA(Gln). This chain is Aspartyl/glutamyl-tRNA(Asn/Gln) amidotransferase subunit C, found in Methylobacterium nodulans (strain LMG 21967 / CNCM I-2342 / ORS 2060).